The chain runs to 168 residues: Small ribosomal subunit protein uS9 (168 aa).

Residues 1–38 (MAKIADSIDSAQADSVENVESYSTETPESAAPAAPRPV) are disordered. Residues 9-22 (DSAQADSVENVESY) are compositionally biased toward polar residues. Low complexity predominate over residues 23 to 37 (STETPESAAPAAPRP).

It belongs to the universal ribosomal protein uS9 family.

In Leifsonia xyli subsp. xyli (strain CTCB07), this protein is Small ribosomal subunit protein uS9.